Here is a 514-residue protein sequence, read N- to C-terminus: Histidine ammonia-lyase (514 aa).

The segment at residues 147–149 (ASG) is a cross-link (5-imidazolinone (Ala-Gly)). At Ser-148 the chain carries 2,3-didehydroalanine (Ser).

The protein belongs to the PAL/histidase family. In terms of processing, contains an active site 4-methylidene-imidazol-5-one (MIO), which is formed autocatalytically by cyclization and dehydration of residues Ala-Ser-Gly.

Its subcellular location is the cytoplasm. It carries out the reaction L-histidine = trans-urocanate + NH4(+). It functions in the pathway amino-acid degradation; L-histidine degradation into L-glutamate; N-formimidoyl-L-glutamate from L-histidine: step 1/3. The polypeptide is Histidine ammonia-lyase (Gloeobacter violaceus (strain ATCC 29082 / PCC 7421)).